The sequence spans 276 residues: Octopine-binding periplasmic protein (276 aa).

An N-terminal signal peptide occupies residues 1–20; it reads MKLKTILCAALLLVAGQAAA. An intrachain disulfide couples cysteine 57 to cysteine 64.

Belongs to the bacterial solute-binding protein 3 family.

It localises to the periplasm. Component of the octopine active transport system probably consisting of four subunits: Q, M, P and T. This chain is Octopine-binding periplasmic protein (occT), found in Agrobacterium tumefaciens (strain Ach5).